The primary structure comprises 51 residues: Cytochrome b559 subunit beta (51 aa).

A helical membrane pass occupies residues 26-42; it reads WLAVHALTVPTIFFLGA. A heme-binding site is contributed by His-30.

The protein belongs to the PsbE/PsbF family. Heterodimer of an alpha subunit and a beta subunit. PSII is composed of 1 copy each of membrane proteins PsbA, PsbB, PsbC, PsbD, PsbE, PsbF, PsbH, PsbI, PsbJ, PsbK, PsbL, PsbM, PsbT, PsbX, Psb30/Ycf12, peripheral proteins PsbO, CyanoQ (PsbQ), PsbU, PsbV and a large number of cofactors. It forms dimeric complexes. It depends on heme b as a cofactor.

It is found in the cell inner membrane. Its function is as follows. This b-type cytochrome is tightly associated with the reaction center of photosystem II (PSII). PSII is a light-driven water:plastoquinone oxidoreductase that uses light energy to abstract electrons from H(2)O, generating O(2) and a proton gradient subsequently used for ATP formation. It consists of a core antenna complex that captures photons, and an electron transfer chain that converts photonic excitation into a charge separation. The chain is Cytochrome b559 subunit beta from Gloeobacter violaceus (strain ATCC 29082 / PCC 7421).